The primary structure comprises 198 residues: Putative 3-methyladenine DNA glycosylase (198 aa).

The protein belongs to the DNA glycosylase MPG family.

The sequence is that of Putative 3-methyladenine DNA glycosylase from Natranaerobius thermophilus (strain ATCC BAA-1301 / DSM 18059 / JW/NM-WN-LF).